We begin with the raw amino-acid sequence, 180 residues long: Large ribosomal subunit protein uL5 (180 aa).

This sequence belongs to the universal ribosomal protein uL5 family. Part of the 50S ribosomal subunit; part of the 5S rRNA/L5/L18/L25 subcomplex. Contacts the 5S rRNA and the P site tRNA. Forms a bridge to the 30S subunit in the 70S ribosome.

Functionally, this is one of the proteins that bind and probably mediate the attachment of the 5S RNA into the large ribosomal subunit, where it forms part of the central protuberance. In the 70S ribosome it contacts protein S13 of the 30S subunit (bridge B1b), connecting the 2 subunits; this bridge is implicated in subunit movement. Contacts the P site tRNA; the 5S rRNA and some of its associated proteins might help stabilize positioning of ribosome-bound tRNAs. In Streptococcus suis (strain 05ZYH33), this protein is Large ribosomal subunit protein uL5.